The sequence spans 149 residues: HMG1/2-like protein (149 aa).

Composition is skewed to basic and acidic residues over residues 1 to 15 and 35 to 44; these read MKGGKSKGESKKAET and KGKEPKDPNK. Disordered regions lie at residues 1 to 52 and 112 to 149; these read MKGG…PSAF and AYNKKLEGKDDEEGSDKSKSEVNDEDEDEEDEEDEDDD. A DNA-binding region (HMG box) is located at residues 45 to 114; that stretch reads PKRPPSAFFV…EYEITLQAYN (70 aa). Acidic residues predominate over residues 134–149; it reads NDEDEDEEDEEDEDDD.

This sequence belongs to the HMGB family.

It localises to the nucleus. The protein is HMG1/2-like protein of Vicia faba (Broad bean).